A 379-amino-acid polypeptide reads, in one-letter code: Chorismate synthase (379 aa).

The NADP(+) site is built by Arg48 and Arg54. FMN-binding positions include 125–127 (RSS), 241–242 (NA), Gly286, 301–305 (KPTSS), and Arg327.

This sequence belongs to the chorismate synthase family. Homotetramer. FMNH2 is required as a cofactor.

The catalysed reaction is 5-O-(1-carboxyvinyl)-3-phosphoshikimate = chorismate + phosphate. It participates in metabolic intermediate biosynthesis; chorismate biosynthesis; chorismate from D-erythrose 4-phosphate and phosphoenolpyruvate: step 7/7. Functionally, catalyzes the anti-1,4-elimination of the C-3 phosphate and the C-6 proR hydrogen from 5-enolpyruvylshikimate-3-phosphate (EPSP) to yield chorismate, which is the branch point compound that serves as the starting substrate for the three terminal pathways of aromatic amino acid biosynthesis. This reaction introduces a second double bond into the aromatic ring system. This Rhodospirillum centenum (strain ATCC 51521 / SW) protein is Chorismate synthase.